Consider the following 251-residue polypeptide: MKIKMNSKDVNFWYGEKKALNDINLPIYENKITALIGPSGCGKSTFLRCLNRMNDLISGVKITGEITLDEKNIYDKDVDVVELRKRVGMVFQKPNPFPMSIYDNIAYGPRIHGIKDKKQLDEIVEWALKKSALWDDVKEDLKKSALKLSGGQQQRLCIARTIAVKPDVILMDEPCSALDPISTLKIEDLMVELKKEYTIVIVTHNMQQASRVSDYTGFFMLGDLVEFNKTDKLFVEPENKKTEDYISGRFG.

The region spanning 5–246 (MNSKDVNFWY…PENKKTEDYI (242 aa)) is the ABC transporter domain. 37–44 (GPSGCGKS) lines the ATP pocket.

It belongs to the ABC transporter superfamily. Phosphate importer (TC 3.A.1.7) family. As to quaternary structure, the complex is composed of two ATP-binding proteins (PstB), two transmembrane proteins (PstC and PstA) and a solute-binding protein (PstS).

The protein localises to the cell membrane. It catalyses the reaction phosphate(out) + ATP + H2O = ADP + 2 phosphate(in) + H(+). In terms of biological role, part of the ABC transporter complex PstSACB involved in phosphate import. Responsible for energy coupling to the transport system. This is Phosphate import ATP-binding protein PstB from Methanococcus maripaludis (strain DSM 14266 / JCM 13030 / NBRC 101832 / S2 / LL).